We begin with the raw amino-acid sequence, 266 residues long: Thymidylate synthase (266 aa).

DUMP is bound by residues Arg-20 and 129–130 (RR). Cys-149 (nucleophile) is an active-site residue. Residues 169-172 (RSCD), Asn-180, and 210-212 (HVY) each bind dUMP. Asp-172 is a (6R)-5,10-methylene-5,6,7,8-tetrahydrofolate binding site. Position 265 (Ala-265) interacts with (6R)-5,10-methylene-5,6,7,8-tetrahydrofolate.

The protein belongs to the thymidylate synthase family. Bacterial-type ThyA subfamily. Homodimer.

It is found in the cytoplasm. It catalyses the reaction dUMP + (6R)-5,10-methylene-5,6,7,8-tetrahydrofolate = 7,8-dihydrofolate + dTMP. It functions in the pathway pyrimidine metabolism; dTTP biosynthesis. In terms of biological role, catalyzes the reductive methylation of 2'-deoxyuridine-5'-monophosphate (dUMP) to 2'-deoxythymidine-5'-monophosphate (dTMP) while utilizing 5,10-methylenetetrahydrofolate (mTHF) as the methyl donor and reductant in the reaction, yielding dihydrofolate (DHF) as a by-product. This enzymatic reaction provides an intracellular de novo source of dTMP, an essential precursor for DNA biosynthesis. This is Thymidylate synthase from Bifidobacterium longum (strain NCC 2705).